A 240-amino-acid chain; its full sequence is MATLFIADLHLQTEEPAIVAGFLRFLAVEARQADALYILGDLFEAWIGDDDPNPLHREIAAAIKAVVNVGVPCFFIHGNRDFLIGKRFARESGMILLPQEKVLDLYGRNVLIMHGDTLCTDDAGYQAFRAKVHNPWVQRLFLTLPLFIRRRIAARMRAGSKAANSSKSLDIMDVNAQTVVAEMEKHRVQWLVHGHTHRPAVHELSVNDQPAFRVVLGAWHHEGSMVKVTPDNVELIAFPL.

5 residues coordinate Mn(2+): aspartate 8, histidine 10, aspartate 41, asparagine 79, and histidine 114. 79–80 is a binding site for substrate; sequence NR. Positions 122, 160, 164, 167, and 195 each coordinate substrate. Mn(2+) contacts are provided by histidine 195 and histidine 197.

The protein belongs to the LpxH family. It depends on Mn(2+) as a cofactor.

Its subcellular location is the cell inner membrane. It catalyses the reaction UDP-2-N,3-O-bis[(3R)-3-hydroxytetradecanoyl]-alpha-D-glucosamine + H2O = 2-N,3-O-bis[(3R)-3-hydroxytetradecanoyl]-alpha-D-glucosaminyl 1-phosphate + UMP + 2 H(+). The protein operates within glycolipid biosynthesis; lipid IV(A) biosynthesis; lipid IV(A) from (3R)-3-hydroxytetradecanoyl-[acyl-carrier-protein] and UDP-N-acetyl-alpha-D-glucosamine: step 4/6. Its function is as follows. Hydrolyzes the pyrophosphate bond of UDP-2,3-diacylglucosamine to yield 2,3-diacylglucosamine 1-phosphate (lipid X) and UMP by catalyzing the attack of water at the alpha-P atom. Involved in the biosynthesis of lipid A, a phosphorylated glycolipid that anchors the lipopolysaccharide to the outer membrane of the cell. This Salmonella agona (strain SL483) protein is UDP-2,3-diacylglucosamine hydrolase.